The chain runs to 68 residues: Small ribosomal subunit protein bS21 (68 aa).

The segment at 36 to 68 is disordered; that stretch reads YEKPSEKRARERAAAVRRSRKLERKRAERDGIR. A compositionally biased stretch (basic and acidic residues) spans 37–49; that stretch reads EKPSEKRARERAA. Basic residues predominate over residues 50–59; sequence AVRRSRKLER.

The protein belongs to the bacterial ribosomal protein bS21 family.

This is Small ribosomal subunit protein bS21 from Zymomonas mobilis subsp. mobilis (strain ATCC 31821 / ZM4 / CP4).